We begin with the raw amino-acid sequence, 723 residues long: CSC1-like protein ERD4 (723 aa).

Over 1–5 (MEFAS) the chain is Cytoplasmic. A helical membrane pass occupies residues 6-26 (FLVSLGTSAIIFVVLMFLFTW). At 27–90 (LSRRPGNVPV…TAVYFVFQST (64 aa)) the chain is on the extracellular side. The helical transmembrane segment at 91 to 111 (VLGIFALSALLLLPTLLPIAA) threads the bilayer. Residues 112 to 148 (TDNNLETSRSATDTTSNGTFSQLDNLSMANITKSSSR) lie on the Cytoplasmic side of the membrane. A helical membrane pass occupies residues 149-169 (LWAFLGAVYWVSVVTYFMLWK). Residues 170–364 (AYKHVAALRA…IKFFSRIVRQ (195 aa)) are Extracellular-facing. The chain crosses the membrane as a helical span at residues 365 to 385 (YVIYFLVAITILFYMIPIAFV). The Cytoplasmic portion of the chain corresponds to 386–416 (SAITTLANLQKALPFLKPIVDIAFIRTILES). A helical transmembrane segment spans residues 417–437 (YLPQIALIVFLAMLPKFLMFL). The Extracellular segment spans residues 438–456 (SKSEGIPSQSHAIRATSGK). The chain crosses the membrane as a helical span at residues 457-477 (YFYFSVLNVFIGVTLAGSLFE). Residues 478-508 (NLKALEEKPNSFITLLATSLPKSATFFLTYV) lie on the Cytoplasmic side of the membrane. A helical membrane pass occupies residues 509 to 529 (ALKFFVGYGLELSRIIPLIIF). Topologically, residues 530 to 572 (HLKKKYLCKTEAEVKEAWYPGDLSYATRVPSDMLILTITFCYS) are extracellular. Residues 573–593 (VIAPLILVFGVIYFGLGWLIL) form a helical membrane-spanning segment. Residues 594 to 614 (RNQALKVYVPSYESYGRMWPH) lie on the Cytoplasmic side of the membrane. The chain crosses the membrane as a helical span at residues 615–635 (IHTRILAALFLFQLVMFGYLG). The Extracellular segment spans residues 636–637 (VK). A helical membrane pass occupies residues 638–658 (IFVWAILLVPLIFISLIFGYV). The Cytoplasmic segment spans residues 659-723 (CRQKFYGGFE…YQDYAAISAA (65 aa)).

It belongs to the CSC1 (TC 1.A.17) family.

The protein localises to the plastid. Its subcellular location is the chloroplast membrane. Functionally, acts as an osmosensitive calcium-permeable cation channel. The chain is CSC1-like protein ERD4 (ERD4) from Brassica juncea (Indian mustard).